The primary structure comprises 301 residues: Tetrapeptide repeat homeobox protein 2 (301 aa).

2 disordered regions span residues 1–27 (MQDP…RTVY) and 273–301 (SLST…LLDL). 2 stretches are compositionally biased toward basic and acidic residues: residues 16–26 (PPRRQRQERTV) and 281–292 (YKEEDGFVDKNH). A DNA-binding region (homeobox) is located at residues 20 to 79 (QRQERTVYTESQQKVLEFYFQKDQYPNYDQRLNLAEMLSLREQQLQVWFKNRRAKLARER).

This sequence belongs to the paired homeobox family.

The protein localises to the nucleus. Its function is as follows. Transcription factor expressed after fertilization required for zygotic genome activation (ZGA), a critical event in early embryonic development during which the developmental control passes from maternally provided mRNAs to the expression of the zygotic genome after fertilization. Binds and activates expression of key ZGA marker genes, such as NANOGNB, ZSCAN4, DUXB, KLF5 and DPPA3. Binds to regulatory DNA sequences containing a 5'-TAATCC-3' sequence motif. In Homo sapiens (Human), this protein is Tetrapeptide repeat homeobox protein 2.